The primary structure comprises 330 residues: Anthranilate phosphoribosyltransferase (330 aa).

5-phospho-alpha-D-ribose 1-diphosphate-binding positions include Gly77, 80–81 (GD), Thr85, 87–90 (NIST), 105–113 (KHGNKAVSS), and Ser117. Position 77 (Gly77) interacts with anthranilate. Ser89 contacts Mg(2+). Asn108 contributes to the anthranilate binding site. Residue Arg163 coordinates anthranilate. Mg(2+)-binding residues include Asp222 and Glu223.

Belongs to the anthranilate phosphoribosyltransferase family. Homodimer. Mg(2+) is required as a cofactor.

The catalysed reaction is N-(5-phospho-beta-D-ribosyl)anthranilate + diphosphate = 5-phospho-alpha-D-ribose 1-diphosphate + anthranilate. The protein operates within amino-acid biosynthesis; L-tryptophan biosynthesis; L-tryptophan from chorismate: step 2/5. Its function is as follows. Catalyzes the transfer of the phosphoribosyl group of 5-phosphorylribose-1-pyrophosphate (PRPP) to anthranilate to yield N-(5'-phosphoribosyl)-anthranilate (PRA). The polypeptide is Anthranilate phosphoribosyltransferase (Pelagibacter ubique (strain HTCC1062)).